The chain runs to 277 residues: MAVDMIVEPKWVVQNFGNIRILDASWTFKPKADVAEYKAKYYNKFGVGMNELKNPEYLAEHINGAAHFNFDIAYYPSEDERFTLYTPEEFSSYVKRLGVFNGDHLVIYGRGKDGGMAAASRAYWTFRYYGYTTVSVLNGGIEAFKLAQGVVQSDSKAEGIRCKDAIHFPIGEVCAAKGFKKKTDCDQAFAAKGIKVGDTVVISCGIGLSASAICLAAARSGIVAKLYNGGVHELAYKAPQHLNMRVTLLLHAITVLRCTYIHFTFLYAIVIKIERIV.

Rhodanese domains follow at residues 15–153 (NFGN…VVQS) and 155–243 (SKAE…QHLN). The active-site Cysteine persulfide intermediate is the Cys-204.

The catalysed reaction is thiosulfate + hydrogen cyanide = thiocyanate + sulfite + 2 H(+). The polypeptide is Putative thiosulfate sulfurtransferase mpst-4 (Caenorhabditis elegans).